Reading from the N-terminus, the 99-residue chain is Carboxysome shell vertex protein CcmL (99 aa).

Positions 1–83 (MRIAKVRGTV…VDAAVIAIID (83 aa)) constitute a BMV domain.

The protein belongs to the CcmL/EutN family. CcmL subfamily. Homopentamer. Interacts with full-length CcmM.

The protein resides in the carboxysome. Functionally, probably forms vertices in the carboxysome, a polyhedral inclusion where RuBisCO (ribulose bisphosphate carboxylase, rbcL-rbcS) is sequestered. Has been modeled to induce curvature upon insertion into an otherwise flat hexagonal molecular layer of CcmK subunits. Beta-carboxysome assembly initiates when soluble RuBisCO is condensed into a liquid matrix in a pre-carboxysome by the RbcS-like domains of probably both CcmM58 and CcmM35. CcmN interacts with the N-terminus of CcmM58, and then recruits the CcmK2 major shell protein via CcmN's encapsulation peptide. Shell formation requires CcmK proteins and CcmO. CcmL caps the otherwise elongated carboxysome. Once fully encapsulated carboxysomes are formed, they migrate within the cell probably via interactions with the cytoskeleton. This Synechococcus elongatus (strain ATCC 33912 / PCC 7942 / FACHB-805) (Anacystis nidulans R2) protein is Carboxysome shell vertex protein CcmL.